A 180-amino-acid polypeptide reads, in one-letter code: Nucleoid-associated protein At4g30620, chloroplastic (180 aa).

A chloroplast-targeting transit peptide spans 1 to 48; the sequence is MASTATNTDFFKTLLSPFSNGNAAQRSSRQNIVWLNRKQSGNNNRSLR. The tract at residues 45 to 65 is disordered; the sequence is RSLRVNGLFGGGKKDNKEDGQ. Positions 56–65 are enriched in basic and acidic residues; that stretch reads GKKDNKEDGQ.

The protein belongs to the YbaB/EbfC family. As to quaternary structure, homodimer. Binds to the translation initiation factors TIF3E1.

The protein localises to the plastid. The protein resides in the chloroplast. Functionally, binds to DNA and alters its conformation. May be involved in regulation of gene expression, nucleoid organization and DNA protection. In Arabidopsis thaliana (Mouse-ear cress), this protein is Nucleoid-associated protein At4g30620, chloroplastic.